A 196-amino-acid chain; its full sequence is Probable peptidyl-prolyl cis-trans isomerase (196 aa).

The N-terminal stretch at 1-26 is a signal peptide; it reads MSFIRSALAAAAFVALSIGAVQTASA. The PPIase cyclophilin-type domain occupies 29–194; the sequence is PENTVILKLK…KIIKATIEAD (166 aa).

The protein belongs to the cyclophilin-type PPIase family.

The protein localises to the periplasm. It catalyses the reaction [protein]-peptidylproline (omega=180) = [protein]-peptidylproline (omega=0). Its function is as follows. PPIases accelerate the folding of proteins. It catalyzes the cis-trans isomerization of proline imidic peptide bonds in oligopeptides. The polypeptide is Probable peptidyl-prolyl cis-trans isomerase (ppi) (Brucella abortus (strain 2308)).